A 211-amino-acid polypeptide reads, in one-letter code: Thiamine-phosphate synthase (211 aa).

Residues 37–41 (QLRIK) and Asn-69 contribute to the 4-amino-2-methyl-5-(diphosphooxymethyl)pyrimidine site. Positions 70 and 89 each coordinate Mg(2+). Ser-108 contacts 4-amino-2-methyl-5-(diphosphooxymethyl)pyrimidine. 134–136 (TQT) contributes to the 2-[(2R,5Z)-2-carboxy-4-methylthiazol-5(2H)-ylidene]ethyl phosphate binding site. Lys-137 is a binding site for 4-amino-2-methyl-5-(diphosphooxymethyl)pyrimidine. Residues Gly-166 and 186–187 (VS) each bind 2-[(2R,5Z)-2-carboxy-4-methylthiazol-5(2H)-ylidene]ethyl phosphate.

This sequence belongs to the thiamine-phosphate synthase family. The cofactor is Mg(2+).

It catalyses the reaction 2-[(2R,5Z)-2-carboxy-4-methylthiazol-5(2H)-ylidene]ethyl phosphate + 4-amino-2-methyl-5-(diphosphooxymethyl)pyrimidine + 2 H(+) = thiamine phosphate + CO2 + diphosphate. The enzyme catalyses 2-(2-carboxy-4-methylthiazol-5-yl)ethyl phosphate + 4-amino-2-methyl-5-(diphosphooxymethyl)pyrimidine + 2 H(+) = thiamine phosphate + CO2 + diphosphate. The catalysed reaction is 4-methyl-5-(2-phosphooxyethyl)-thiazole + 4-amino-2-methyl-5-(diphosphooxymethyl)pyrimidine + H(+) = thiamine phosphate + diphosphate. It functions in the pathway cofactor biosynthesis; thiamine diphosphate biosynthesis; thiamine phosphate from 4-amino-2-methyl-5-diphosphomethylpyrimidine and 4-methyl-5-(2-phosphoethyl)-thiazole: step 1/1. Functionally, condenses 4-methyl-5-(beta-hydroxyethyl)thiazole monophosphate (THZ-P) and 2-methyl-4-amino-5-hydroxymethyl pyrimidine pyrophosphate (HMP-PP) to form thiamine monophosphate (TMP). The polypeptide is Thiamine-phosphate synthase (Escherichia coli O157:H7).